A 187-amino-acid polypeptide reads, in one-letter code: ATP synthase subunit b (187 aa).

A helical membrane pass occupies residues 31–51 (VAIMGLAIFVLFLILSYLLFN).

It belongs to the ATPase B chain family. F-type ATPases have 2 components, F(1) - the catalytic core - and F(0) - the membrane proton channel. F(1) has five subunits: alpha(3), beta(3), gamma(1), delta(1), epsilon(1). F(0) has three main subunits: a(1), b(2) and c(10-14). The alpha and beta chains form an alternating ring which encloses part of the gamma chain. F(1) is attached to F(0) by a central stalk formed by the gamma and epsilon chains, while a peripheral stalk is formed by the delta and b chains.

Its subcellular location is the cell membrane. F(1)F(0) ATP synthase produces ATP from ADP in the presence of a proton or sodium gradient. F-type ATPases consist of two structural domains, F(1) containing the extramembraneous catalytic core and F(0) containing the membrane proton channel, linked together by a central stalk and a peripheral stalk. During catalysis, ATP synthesis in the catalytic domain of F(1) is coupled via a rotary mechanism of the central stalk subunits to proton translocation. Its function is as follows. Component of the F(0) channel, it forms part of the peripheral stalk, linking F(1) to F(0). The chain is ATP synthase subunit b from Lachnoclostridium phytofermentans (strain ATCC 700394 / DSM 18823 / ISDg) (Clostridium phytofermentans).